Consider the following 537-residue polypeptide: Cytochrome P450 4F6 (537 aa).

Cys468 contributes to the heme binding site.

The protein belongs to the cytochrome P450 family. The cofactor is heme. High expression in liver and kidney. Lower expression in brain.

Its subcellular location is the endoplasmic reticulum membrane. The protein localises to the microsome membrane. The enzyme catalyses an organic molecule + reduced [NADPH--hemoprotein reductase] + O2 = an alcohol + oxidized [NADPH--hemoprotein reductase] + H2O + H(+). The chain is Cytochrome P450 4F6 (Cyp4f6) from Rattus norvegicus (Rat).